The sequence spans 365 residues: Ribosomal RNA large subunit methyltransferase M (365 aa).

S-adenosyl-L-methionine is bound by residues Ser-193, 226 to 229, Asp-245, Asp-265, and Asp-282; that span reads CPGG. Lys-311 serves as the catalytic Proton acceptor.

The protein belongs to the class I-like SAM-binding methyltransferase superfamily. RNA methyltransferase RlmE family. RlmM subfamily. As to quaternary structure, monomer.

Its subcellular location is the cytoplasm. The enzyme catalyses cytidine(2498) in 23S rRNA + S-adenosyl-L-methionine = 2'-O-methylcytidine(2498) in 23S rRNA + S-adenosyl-L-homocysteine + H(+). Its function is as follows. Catalyzes the 2'-O-methylation at nucleotide C2498 in 23S rRNA. In Alteromonas mediterranea (strain DSM 17117 / CIP 110805 / LMG 28347 / Deep ecotype), this protein is Ribosomal RNA large subunit methyltransferase M.